The chain runs to 56 residues: Large ribosomal subunit protein bL33 (56 aa).

Belongs to the bacterial ribosomal protein bL33 family.

This is Large ribosomal subunit protein bL33 from Actinobacillus pleuropneumoniae serotype 5b (strain L20).